A 313-amino-acid chain; its full sequence is Putative zinc finger protein 077L (313 aa).

A C3H1-type zinc finger spans residues 174–199 (CFSITKGIECPHYSCTYIHNYSQIEH). Residues 294–313 (SDDSDSENNDEDDDWKIDLF) form a disordered region. Over residues 296-313 (DSDSENNDEDDDWKIDLF) the composition is skewed to acidic residues.

It belongs to the IIV-6 077L family.

The sequence is that of Putative zinc finger protein 077L from Invertebrate iridescent virus 6 (IIV-6).